The primary structure comprises 386 residues: MSELIQNVKTSFEQVLGYAPSHIIQAPGRVNLIGEHTDYNDGFVLPCAINYQTVVAAAKREDNLVRVVSVDYGNAVDEFDITQAITFQQDKMWANYIRGVVKCLLARGYAFTGADISVSGNVPQGAGLSSSAALEVVIGQTFKVLFNLEISQAEIALNGQQAENEFVGCNCGIMDQMISAEGRENHAMLLDCRSLETESVSMPEEMAVVIINSNKKRGLVDSEYNTRRQQCEEAARIFGVKALRDVTIEQFNEKVAELDEMVAKRARHVITENDRTVEAAQALRAHDMKRMGELMAESHASMRDDFEITVKEIDTLVEIVKEVIGDQGGVRMTGGGFGGCIVALVPPALVDDVKATVAAKYQAATGLKESIYVCQAKDGAGLVEML.

Residue 35–38 (EHTD) coordinates substrate. ATP is bound by residues S69 and 125 to 131 (GAGLSSS). Mg(2+) is bound by residues S131 and E163. D175 serves as the catalytic Proton acceptor. Y224 is a substrate binding site.

This sequence belongs to the GHMP kinase family. GalK subfamily.

The protein resides in the cytoplasm. It catalyses the reaction alpha-D-galactose + ATP = alpha-D-galactose 1-phosphate + ADP + H(+). The protein operates within carbohydrate metabolism; galactose metabolism. Catalyzes the transfer of the gamma-phosphate of ATP to D-galactose to form alpha-D-galactose-1-phosphate (Gal-1-P). This Vibrio vulnificus (strain YJ016) protein is Galactokinase.